The chain runs to 261 residues: Succinate dehydrogenase [ubiquinone] iron-sulfur subunit, mitochondrial (261 aa).

One can recognise a 2Fe-2S ferredoxin-type domain in the interval 31–122 (FKIYRWNPDT…DVKIYPLPHM (92 aa)). Residues C82, C87, C90, and C102 each contribute to the [2Fe-2S] cluster site. One can recognise a 4Fe-4S ferredoxin-type domain in the interval 164–194 (DRKKLDGLYECILCACCSTACPSYWWNNEQY). Residues C174, C177, and C180 each coordinate [4Fe-4S] cluster. Residue C184 participates in [3Fe-4S] cluster binding. W189 provides a ligand contact to a ubiquinone. 2 residues coordinate [3Fe-4S] cluster: C231 and C237. C241 is a [4Fe-4S] cluster binding site.

The protein belongs to the succinate dehydrogenase/fumarate reductase iron-sulfur protein family. Component of complex II composed of four subunits: a flavoprotein (FP), an iron-sulfur protein (IP), and a cytochrome b composed of a large and a small subunit. [2Fe-2S] cluster serves as cofactor. Requires [3Fe-4S] cluster as cofactor. It depends on [4Fe-4S] cluster as a cofactor.

It localises to the mitochondrion inner membrane. The catalysed reaction is a quinone + succinate = fumarate + a quinol. It functions in the pathway carbohydrate metabolism; tricarboxylic acid cycle; fumarate from succinate (eukaryal route): step 1/1. Its function is as follows. Iron-sulfur protein (IP) subunit of succinate dehydrogenase (SDH) that is involved in complex II of the mitochondrial electron transport chain and is responsible for transferring electrons from succinate to ubiquinone (coenzyme Q). This chain is Succinate dehydrogenase [ubiquinone] iron-sulfur subunit, mitochondrial (SDH2), found in Eremothecium gossypii (strain ATCC 10895 / CBS 109.51 / FGSC 9923 / NRRL Y-1056) (Yeast).